A 352-amino-acid polypeptide reads, in one-letter code: tRNA uridine(34) hydroxylase (352 aa).

In terms of domain architecture, Rhodanese spans 144–238 (SDPDVILIDT…YLEEVPASDS (95 aa)). The Cysteine persulfide intermediate role is filled by C198.

Belongs to the TrhO family.

It catalyses the reaction uridine(34) in tRNA + AH2 + O2 = 5-hydroxyuridine(34) in tRNA + A + H2O. Functionally, catalyzes oxygen-dependent 5-hydroxyuridine (ho5U) modification at position 34 in tRNAs. In Psychrobacter arcticus (strain DSM 17307 / VKM B-2377 / 273-4), this protein is tRNA uridine(34) hydroxylase.